The primary structure comprises 351 residues: Matrix protein (351 aa).

The protein belongs to the morbillivirus/respirovirus/rubulavirus M protein family.

Its subcellular location is the virion. Its function is as follows. Plays a crucial role in virus assembly and interacts with the RNP complex as well as with the viral membrane. The chain is Matrix protein (M) from Bos taurus (Bovine).